Here is a 540-residue protein sequence, read N- to C-terminus: Cytokinin dehydrogenase 5 (540 aa).

The first 22 residues, 1 to 22 (MNREMTSSFLLLTFAICKLIIA), serve as a signal peptide directing secretion. Residues 63–241 (SPEEPLAVLH…TRARISLEPA (179 aa)) form the FAD-binding PCMH-type domain. 3 residues coordinate FAD: Ala-97, Gly-99, and Gly-101. His-102 carries the post-translational modification Pros-8alpha-FAD histidine. FAD contacts are provided by Ser-103, Gln-107, Asp-165, Thr-170, Ser-176, Ile-180, and Ile-231. Asn-310 and Asn-406 each carry an N-linked (GlcNAc...) asparagine glycan. 2 residues coordinate FAD: Tyr-479 and Gln-517.

Belongs to the oxygen-dependent FAD-linked oxidoreductase family. The cofactor is FAD. As to expression, expressed in the developing leaf petioles and in the rib zone of the axillary shoot meristems. In roots, expressed in the vascular cylinder within the root apical meristem and only faintly detectable in the differentiated root.

It is found in the secreted. The protein localises to the extracellular space. The enzyme catalyses N(6)-dimethylallyladenine + A + H2O = 3-methyl-2-butenal + adenine + AH2. In terms of biological role, catalyzes the oxidation of cytokinins, a family of N(6)-substituted adenine derivatives that are plant hormones, where the substituent is an isopentenyl group. In association with CKX3 regulates the activity of the reproductive meristems, flower organ size and ovule formation. The sequence is that of Cytokinin dehydrogenase 5 (CKX5) from Arabidopsis thaliana (Mouse-ear cress).